The sequence spans 64 residues: Putative antitoxin VapB4 (64 aa).

Belongs to the UPF0165 family.

In terms of biological role, possibly the antitoxin component of a type II toxin-antitoxin (TA) system. Its cognate toxin is VapC4 (Potential). The polypeptide is Putative antitoxin VapB4 (vapB4) (Archaeoglobus fulgidus (strain ATCC 49558 / DSM 4304 / JCM 9628 / NBRC 100126 / VC-16)).